The primary structure comprises 139 residues: HTH-type transcriptional regulator MntR (139 aa).

In terms of domain architecture, HTH dtxR-type spans methionine 1–threonine 63. Residues aspartate 8, glutamate 11, histidine 77, glutamate 99, glutamate 102, and histidine 103 each contribute to the Mn(2+) site.

This sequence belongs to the DtxR/MntR family. As to quaternary structure, homodimer.

It localises to the cytoplasm. Its activity is regulated as follows. DNA binding is strongly activated by Mn(2+). Its function is as follows. Central regulator of manganese homeostasis. The sequence is that of HTH-type transcriptional regulator MntR from Lysinibacillus sphaericus (strain C3-41).